A 273-amino-acid polypeptide reads, in one-letter code: Urease accessory protein UreD (273 aa).

This sequence belongs to the UreD family. In terms of assembly, ureD, UreF and UreG form a complex that acts as a GTP-hydrolysis-dependent molecular chaperone, activating the urease apoprotein by helping to assemble the nickel containing metallocenter of UreC. The UreE protein probably delivers the nickel.

It localises to the cytoplasm. In terms of biological role, required for maturation of urease via the functional incorporation of the urease nickel metallocenter. This chain is Urease accessory protein UreD, found in Rhizobium etli (strain ATCC 51251 / DSM 11541 / JCM 21823 / NBRC 15573 / CFN 42).